We begin with the raw amino-acid sequence, 127 residues long: Prophage antitermination protein Q homolog QuuD (127 aa).

The protein belongs to the phage antitermination Q type 1 family.

Functionally, positively regulate expression of some phage genes. Bacterial host RNA polymerase modified by antitermination proteins transcribes through termination sites that otherwise prevent expression of the regulated genes. This is Prophage antitermination protein Q homolog QuuD (quuD) from Escherichia coli (strain K12).